Here is a 457-residue protein sequence, read N- to C-terminus: UDP-N-acetylmuramoylalanine--D-glutamate ligase (457 aa).

126-132 (GTAGKGS) contacts ATP.

This sequence belongs to the MurCDEF family.

It is found in the cytoplasm. The catalysed reaction is UDP-N-acetyl-alpha-D-muramoyl-L-alanine + D-glutamate + ATP = UDP-N-acetyl-alpha-D-muramoyl-L-alanyl-D-glutamate + ADP + phosphate + H(+). The protein operates within cell wall biogenesis; peptidoglycan biosynthesis. Its function is as follows. Cell wall formation. Catalyzes the addition of glutamate to the nucleotide precursor UDP-N-acetylmuramoyl-L-alanine (UMA). This Deinococcus radiodurans (strain ATCC 13939 / DSM 20539 / JCM 16871 / CCUG 27074 / LMG 4051 / NBRC 15346 / NCIMB 9279 / VKM B-1422 / R1) protein is UDP-N-acetylmuramoylalanine--D-glutamate ligase.